A 209-amino-acid polypeptide reads, in one-letter code: MNNNLKSRGIMLVMSSPSGGGKTTISQLLVNELQGEIIRSVSVTTREPRNEEVEGKDYFFVTEDEFHHLCNTNQMLEYAKVFGNYYGIPRRFVMDNINNGISILFSIDWQGAFKLIDIMSEHVVSVFILPPSMEELKRRLYNRSGESDMINQRLKEAAFEISHCYRYNYIIVNHNIEESVQQIKSIFIAEKLKTHRKMFLEQVVKSYYI.

The region spanning 9 to 188 (GIMLVMSSPS…SVQQIKSIFI (180 aa)) is the Guanylate kinase-like domain. 16–23 (SPSGGGKT) lines the ATP pocket.

This sequence belongs to the guanylate kinase family.

Its subcellular location is the cytoplasm. It catalyses the reaction GMP + ATP = GDP + ADP. Its function is as follows. Essential for recycling GMP and indirectly, cGMP. The chain is Guanylate kinase from Ehrlichia ruminantium (strain Gardel).